The following is a 470-amino-acid chain: 3-isopropylmalate dehydratase large subunit (470 aa).

Residues Cys-347, Cys-407, and Cys-410 each contribute to the [4Fe-4S] cluster site.

It belongs to the aconitase/IPM isomerase family. LeuC type 1 subfamily. Heterodimer of LeuC and LeuD. The cofactor is [4Fe-4S] cluster.

The catalysed reaction is (2R,3S)-3-isopropylmalate = (2S)-2-isopropylmalate. It functions in the pathway amino-acid biosynthesis; L-leucine biosynthesis; L-leucine from 3-methyl-2-oxobutanoate: step 2/4. In terms of biological role, catalyzes the isomerization between 2-isopropylmalate and 3-isopropylmalate, via the formation of 2-isopropylmaleate. This chain is 3-isopropylmalate dehydratase large subunit, found in Shewanella amazonensis (strain ATCC BAA-1098 / SB2B).